Here is a 482-residue protein sequence, read N- to C-terminus: Pyruvate kinase (482 aa).

Arg-37 lines the substrate pocket. Asn-39, Ser-41, and Asp-71 together coordinate K(+). ATP is bound at residue 39-42 (NFSH). Positions 78 and 160 each coordinate ATP. Glu-222 contributes to the Mg(2+) binding site. Residues Gly-245, Asp-246, and Thr-278 each contribute to the substrate site. Asp-246 lines the Mg(2+) pocket.

It belongs to the pyruvate kinase family. Homotetramer. Mg(2+) serves as cofactor. K(+) is required as a cofactor.

The catalysed reaction is pyruvate + ATP = phosphoenolpyruvate + ADP + H(+). It functions in the pathway carbohydrate degradation; glycolysis; pyruvate from D-glyceraldehyde 3-phosphate: step 5/5. The sequence is that of Pyruvate kinase (ttuE) from Agrobacterium vitis (Rhizobium vitis).